Here is a 262-residue protein sequence, read N- to C-terminus: Tethering factor for nuclear proteasome cut8 (262 aa).

The protein belongs to the cut8/STS1 family. Binds the proteasome. The N-terminal part (residues 1 to 72) is polyubiquitinated by rhp6, which is required for the interaction with the proteasome.

The protein localises to the nucleus envelope. Functionally, together with nucleoporin alm1, tethers the proteasome to the nuclear envelope. Involved in ubiquitin-mediated protein degradation and facilitates the degradation of nuclear proteins like mitotic cyclin and cut2. Required for normal progression of anaphase. The chain is Tethering factor for nuclear proteasome cut8 from Schizosaccharomyces pombe (strain 972 / ATCC 24843) (Fission yeast).